Reading from the N-terminus, the 200-residue chain is Probable molybdenum cofactor guanylyltransferase (200 aa).

GTP contacts are provided by residues 9–11 (LAG), lysine 21, aspartate 69, and aspartate 100. Mg(2+) is bound at residue aspartate 100.

This sequence belongs to the MobA family. It depends on Mg(2+) as a cofactor.

Its subcellular location is the cytoplasm. The enzyme catalyses Mo-molybdopterin + GTP + H(+) = Mo-molybdopterin guanine dinucleotide + diphosphate. In terms of biological role, transfers a GMP moiety from GTP to Mo-molybdopterin (Mo-MPT) cofactor (Moco or molybdenum cofactor) to form Mo-molybdopterin guanine dinucleotide (Mo-MGD) cofactor. This is Probable molybdenum cofactor guanylyltransferase from Bacillus cereus (strain B4264).